Consider the following 576-residue polypeptide: Proline--tRNA ligase (576 aa).

It belongs to the class-II aminoacyl-tRNA synthetase family. ProS type 1 subfamily. Homodimer.

It is found in the cytoplasm. It carries out the reaction tRNA(Pro) + L-proline + ATP = L-prolyl-tRNA(Pro) + AMP + diphosphate. Functionally, catalyzes the attachment of proline to tRNA(Pro) in a two-step reaction: proline is first activated by ATP to form Pro-AMP and then transferred to the acceptor end of tRNA(Pro). As ProRS can inadvertently accommodate and process non-cognate amino acids such as alanine and cysteine, to avoid such errors it has two additional distinct editing activities against alanine. One activity is designated as 'pretransfer' editing and involves the tRNA(Pro)-independent hydrolysis of activated Ala-AMP. The other activity is designated 'posttransfer' editing and involves deacylation of mischarged Ala-tRNA(Pro). The misacylated Cys-tRNA(Pro) is not edited by ProRS. The chain is Proline--tRNA ligase from Leptospira borgpetersenii serovar Hardjo-bovis (strain JB197).